Consider the following 217-residue polypeptide: Ras-related protein Rab-19 (217 aa).

GTP is bound by residues S26, V28, G29, K30, T31, C32, Y42, S43, E44, S45, and T49. Residue T31 participates in Mg(2+) binding. The short motif at 39–54 (SGVYSESQQNTIGVDF) is the Switch 1 element. Mg(2+) contacts are provided by T49 and D72. Positions 74–89 (AGQERFRTITQSYYRS) match the Switch 2 motif. 7 residues coordinate GTP: G75, N130, K131, D133, S161, A162, and K163. S-geranylgeranyl cysteine attachment occurs at residues C215 and C217. A Cysteine methyl ester modification is found at C217.

This sequence belongs to the small GTPase superfamily. Rab family. Requires Mg(2+) as cofactor. As to expression, expressed in a tissue-specific manner. Detected at high levels in intestine, lung and spleen, and at a lower level in kidney.

The protein localises to the cell membrane. It catalyses the reaction GTP + H2O = GDP + phosphate + H(+). With respect to regulation, regulated by guanine nucleotide exchange factors (GEFs) which promote the exchange of bound GDP for free GTP. Regulated by GTPase activating proteins (GAPs) which increase the GTP hydrolysis activity. Inhibited by GDP dissociation inhibitors (GDIs). Functionally, the small GTPases Rab are key regulators of intracellular membrane trafficking, from the formation of transport vesicles to their fusion with membranes. Rabs cycle between an inactive GDP-bound form and an active GTP-bound form that is able to recruit to membranes different set of downstream effectors directly responsible for vesicle formation, movement, tethering and fusion. This is Ras-related protein Rab-19 from Mus musculus (Mouse).